The sequence spans 515 residues: MTNFSSLLTTIFLCIISSATGSGTIELLISSPQTVLVEPTVCANFECAAPDDLSLARKVQRRVPLRFGTGQYHGEARERIDLHLKIIEPTSNEILALQHHRPAADTEWNSDAPIVIETSRGFNVTVQLRNLCSSNYHGKRCNRYCIANAKLHWECSTHGVRRCSAGWSGEDCSNPICAGGCSNRGRCVAPNQCSCADGFNGTRCEQCLPRAGCVNGDCVNETPNTCKCRDGFIGDRCDIDIKICSLEKPCANGGICSIDSSSSTGYKCHCPFEFVGSQCKTPLSKVRCSAEHVCKNGGACISMDDTNIQCKCRRGFSGKFCEIGNHGDCSAMRCSAGETCQISGDFAICVENDELLLTTNKPAETTKSVEKWREPRKTANDEQASDELQLRLIAAICVLFSVCVIGLALVSFFFYMHSFSKWKHPSSQQAGGSTILPTTTSIPMSTTSSGTGSPVYKVCIIDSEHRGNAPGSSSDSEPDHHCPPPHRHSPPPAYSSLVLYKKVPMAADDESSFRV.

An N-terminal signal peptide occupies residues 1–26 (MTNFSSLLTTIFLCIISSATGSGTIE). The Extracellular portion of the chain corresponds to 27-392 (LLISSPQTVL…QASDELQLRL (366 aa)). An N-linked (GlcNAc...) asparagine glycan is attached at Asn123. In terms of domain architecture, DSL spans 130–172 (NLCSSNYHGKRCNRYCIANAKLHWECSTHGVRRCSAGWSGEDC). 14 cysteine pairs are disulfide-bonded: Cys132–Cys141, Cys145–Cys155, Cys163–Cys172, Cys177–Cys187, Cys181–Cys193, Cys195–Cys204, Cys213–Cys218, Cys228–Cys237, Cys244–Cys256, Cys250–Cys268, Cys270–Cys279, Cys288–Cys300, Cys294–Cys310, and Cys312–Cys321. EGF-like domains lie at 173 to 205 (SNPI…TRCE), 203 to 238 (RCEQ…DRCD), 240 to 280 (DIKI…SQCK), and 284 to 322 (SKVR…KFCE). A glycan (N-linked (GlcNAc...) asparagine) is linked at Asn200. The EGF-like 5; incomplete domain maps to 325–349 (NHGDCSAMRCSAGETCQISGDFAIC). A helical membrane pass occupies residues 393 to 413 (IAAICVLFSVCVIGLALVSFF). The Cytoplasmic segment spans residues 414–515 (FYMHSFSKWK…AADDESSFRV (102 aa)). 2 disordered regions span residues 427–452 (SQQA…SGTG) and 466–494 (RGNA…PPAY). Over residues 431 to 452 (GGSTILPTTTSIPMSTTSSGTG) the composition is skewed to low complexity.

Its subcellular location is the cell membrane. It localises to the nucleus. The protein localises to the cytoplasm. Its function is as follows. Probable ligand for lin-12/Notch and glp-1/Notch receptors and involved in the mediation of Notch signaling. Involved in the lin-12/Notch pathway signaling of cell fate in vulval precursor cells (VPCs), acting redundantly with dsl-1 and lag-2. Contributes to the establishment of the dorsal-ventral axis in early embryos. Involved in the specification of the blastomere cell ABp fate, probably acting as a signal from the P2 blastomere to the glp-1/Notch receptor on ABp and ABa. Probably acts as a signal, from the secondary vulval epithelial cells and the vulval muscle type 1 (vm1) cells, to activate the lin-12/Notch pathway in type 2 vulval muscle (vm2) cells, contributing to formation of the postsynaptic muscle plasma membrane extensions, known as muscle arms. Required for oocyte growth control, acting redundantly with lag-2, perhaps signaling via the glp-1/Notch pathway. Plays a somatic role in ovulation during adulthood, perhaps via lin-12/Notch signaling. Involved in establishing left-right asymmetry during intestinal organogenesis. The protein is Anterior pharynx in excess protein 1 (apx-1) of Caenorhabditis elegans.